The sequence spans 378 residues: Transaldolase 1 (378 aa).

The Schiff-base intermediate with substrate role is filled by Lys-146.

The protein belongs to the transaldolase family. Type 2 subfamily.

It localises to the cytoplasm. It catalyses the reaction D-sedoheptulose 7-phosphate + D-glyceraldehyde 3-phosphate = D-erythrose 4-phosphate + beta-D-fructose 6-phosphate. It participates in carbohydrate degradation; pentose phosphate pathway; D-glyceraldehyde 3-phosphate and beta-D-fructose 6-phosphate from D-ribose 5-phosphate and D-xylulose 5-phosphate (non-oxidative stage): step 2/3. In terms of biological role, transaldolase is important for the balance of metabolites in the pentose-phosphate pathway. In Streptomyces avermitilis (strain ATCC 31267 / DSM 46492 / JCM 5070 / NBRC 14893 / NCIMB 12804 / NRRL 8165 / MA-4680), this protein is Transaldolase 1.